The sequence spans 647 residues: Putative lipase atg15 (647 aa).

Over 1 to 18 (MLPSGKRKADAFSCTSAA) the chain is Cytoplasmic. The chain crosses the membrane as a helical; Signal-anchor for type II membrane protein span at residues 19-39 (RVTAKLALSFLALSTTPLVNA). Topologically, residues 40–647 (FSYEEPNAQI…EGGEGPVNDL (608 aa)) are lumenal. Asn203, Asn225, Asn283, and Asn307 each carry an N-linked (GlcNAc...) asparagine glycan. Residue Ser323 is the Charge relay system of the active site. Asn469 is a glycosylation site (N-linked (GlcNAc...) asparagine). A disordered region spans residues 597–626 (APALPSSVLTPSATATPPEGQPDDSGKRCR).

The protein belongs to the AB hydrolase superfamily. Lipase family. Binds to both phosphatidylinositol (PI) and phosphatidylinositol 3,5-bisphosphate (PIP2).

It localises to the endosome. Its subcellular location is the multivesicular body membrane. It is found in the prevacuolar compartment membrane. The catalysed reaction is a triacylglycerol + H2O = a diacylglycerol + a fatty acid + H(+). Lipase which is essential for lysis of subvacuolar cytoplasm to vacuole targeted bodies and intravacuolar autophagic bodies. Involved in the lysis of intravacuolar multivesicular body (MVB) vesicles. The intravacuolar membrane disintegration by atg15 is critical to life span extension. The sequence is that of Putative lipase atg15 (atg15) from Neurospora crassa (strain ATCC 24698 / 74-OR23-1A / CBS 708.71 / DSM 1257 / FGSC 987).